Here is a 542-residue protein sequence, read N- to C-terminus: Global nitrogen regulator NrpR (542 aa).

A winged helix-turn-helix region spans residues 12-77 (IEILDILSKS…VITERGLEEL (66 aa)). NRD stretches follow at residues 85–320 (RLGS…KANI) and 321–542 (RIKT…YKEI).

It belongs to the NrpR family. Homodimer.

Under nitrogen limitation, binding of the intracellular nitrogen metabolite 2-oxoglutarate to NrpR decreases the binding affinity of NrpR to DNA, leading to initiation of transcription. Transcriptional repressor of nitrogen fixation and assimilation genes. Binds to two tandem operators in the glnA and nif promoters, thereby blocking transcription of the genes. This is Global nitrogen regulator NrpR from Methanocaldococcus jannaschii (strain ATCC 43067 / DSM 2661 / JAL-1 / JCM 10045 / NBRC 100440) (Methanococcus jannaschii).